A 122-amino-acid polypeptide reads, in one-letter code: Large ribosomal subunit protein uL14 (122 aa).

This sequence belongs to the universal ribosomal protein uL14 family. Part of the 50S ribosomal subunit. Forms a cluster with proteins L3 and L19. In the 70S ribosome, L14 and L19 interact and together make contacts with the 16S rRNA in bridges B5 and B8.

In terms of biological role, binds to 23S rRNA. Forms part of two intersubunit bridges in the 70S ribosome. The polypeptide is Large ribosomal subunit protein uL14 (Buchnera aphidicola subsp. Acyrthosiphon pisum (strain 5A)).